Reading from the N-terminus, the 195-residue chain is Glutamyl-tRNA(Gln) amidotransferase subunit C, mitochondrial (195 aa).

Residues 1–18 (MNLSTIGFQVIFKQRLRC) constitute a mitochondrion transit peptide.

This sequence belongs to the GatC family. Subunit of the heterotrimeric GatCAB amidotransferase (AdT) complex, composed of A, B and C subunits.

Its subcellular location is the mitochondrion. The catalysed reaction is L-glutamyl-tRNA(Gln) + L-glutamine + ATP + H2O = L-glutaminyl-tRNA(Gln) + L-glutamate + ADP + phosphate + H(+). Allows the formation of correctly charged Gln-tRNA(Gln) through the transamidation of misacylated Glu-tRNA(Gln) in the mitochondria. The reaction takes place in the presence of glutamine and ATP through an activated gamma-phospho-Glu-tRNA(Gln). The sequence is that of Glutamyl-tRNA(Gln) amidotransferase subunit C, mitochondrial from Brugia malayi (Filarial nematode worm).